Reading from the N-terminus, the 75-residue chain is Exodeoxyribonuclease 7 small subunit (75 aa).

The protein belongs to the XseB family. As to quaternary structure, heterooligomer composed of large and small subunits.

The protein localises to the cytoplasm. It catalyses the reaction Exonucleolytic cleavage in either 5'- to 3'- or 3'- to 5'-direction to yield nucleoside 5'-phosphates.. Functionally, bidirectionally degrades single-stranded DNA into large acid-insoluble oligonucleotides, which are then degraded further into small acid-soluble oligonucleotides. The polypeptide is Exodeoxyribonuclease 7 small subunit (Thermoanaerobacter sp. (strain X514)).